Here is a 473-residue protein sequence, read N- to C-terminus: Dol-P-Glc:Glc(2)Man(9)GlcNAc(2)-PP-Dol alpha-1,2-glucosyltransferase (473 aa).

Over 1–6 the chain is Cytoplasmic; that stretch reads MAQLEG. The chain crosses the membrane as a helical span at residues 7–27; the sequence is YYFSAALSCTFLVSCLLFSAF. The Extracellular portion of the chain corresponds to 28–64; that stretch reads SRALREPYMDEIFHLPQAQRYCEGHFSLSQWDPMITT. A helical membrane pass occupies residues 65 to 85; it reads LPGLYLVSIGVIKPAIWIFGW. The Cytoplasmic segment spans residues 86–97; the sequence is SEHVVCSIGMLR. The chain crosses the membrane as a helical span at residues 98–118; that stretch reads FVNLLFSVGNFYLLYLLFCKV. The Extracellular segment spans residues 119–130; sequence QPRNKAASSIQR. The next 2 membrane-spanning stretches (helical) occupy residues 131–151 and 152–172; these read VLST…FLYY and TEAG…YGNH. The Extracellular portion of the chain corresponds to 173–175; that stretch reads KTS. Residues 176–196 form a helical membrane-spanning segment; sequence AFLGFCGFMFRQTNIIWAVFC. Residues 197-249 are Cytoplasmic-facing; the sequence is AGNVIAQKLTEAWKTELQKKEDRLPPIKGPFAEFRKILQFLLAYSMSFKNLSM. A helical membrane pass occupies residues 250-270; sequence LLLLTWPYILLGFLFCAFVVV. Residues 271 to 283 lie on the Extracellular side of the membrane; that stretch reads NGGIVIGDRSSHE. Residues 284–304 form a helical membrane-spanning segment; the sequence is ACLHFPQLFYFFSFTLFFSFP. Residues 305–323 are Cytoplasmic-facing; the sequence is HLLSPSKIKTFLSLVWKRR. A helical membrane pass occupies residues 324–344; the sequence is ILFFVVTLVSVFLVWKFTYAH. Residues 345 to 367 are Extracellular-facing; the sequence is KYLLADNRHYTFYVWKRVFQRYE. The chain crosses the membrane as a helical span at residues 368 to 388; that stretch reads TVKYLLVPAYIFAGWSIADSL. The Cytoplasmic portion of the chain corresponds to 389-392; the sequence is KSKS. Residues 393–413 form a helical membrane-spanning segment; the sequence is IFWNLMFFICLFTVIVPQKLL. Over 414-436 the chain is Extracellular; the sequence is EFRYFILPYVIYRLNIPLPPTSR. A helical membrane pass occupies residues 437–457; it reads LICELSCYAVVNFITFFIFLN. Residues 458 to 473 lie on the Cytoplasmic side of the membrane; that stretch reads KTFQWPNSQDIQRFMW.

This sequence belongs to the ALG10 glucosyltransferase family.

It is found in the endoplasmic reticulum membrane. It carries out the reaction an alpha-D-Glc-(1-&gt;3)-alpha-D-Glc-(1-&gt;3)-alpha-D-Man-(1-&gt;2)-alpha-D-Man-(1-&gt;2)-alpha-D-Man-(1-&gt;3)-[alpha-D-Man-(1-&gt;2)-alpha-D-Man-(1-&gt;3)-[alpha-D-Man-(1-&gt;2)-alpha-D-Man-(1-&gt;6)]-alpha-D-Man-(1-&gt;6)]-beta-D-Man-(1-&gt;4)-beta-D-GlcNAc-(1-&gt;4)-alpha-D-GlcNAc-diphospho-di-trans,poly-cis-dolichol + a di-trans,poly-cis-dolichyl beta-D-glucosyl phosphate = a alpha-D-Glc-(1-&gt;2)-alpha-D-Glc-(1-&gt;3)-alpha-D-Glc-(1-&gt;3)-alpha-D-Man-(1-&gt;2)-alpha-D-Man-(1-&gt;2)-alpha-D-Man-(1-&gt;3)-[alpha-D-Man-(1-&gt;2)-alpha-D-Man-(1-&gt;3)-[alpha-D-Man-(1-&gt;2)-alpha-D-Man-(1-&gt;6)]-alpha-D-Man-(1-&gt;6)]-beta-D-Man-(1-&gt;4)-beta-D-GlcNAc-(1-&gt;4)-alpha-D-GlcNAc-diphospho-di-trans,poly-cis-dolichol + a di-trans,poly-cis-dolichyl phosphate + H(+). The protein operates within protein modification; protein glycosylation. Its function is as follows. Dol-P-Glc:Glc(2)Man(9)GlcNAc(2)-PP-Dol alpha-1,2-glucosyltransferase that operates in the biosynthetic pathway of dolichol-linked oligosaccharides, the glycan precursors employed in protein asparagine (N)-glycosylation. The assembly of dolichol-linked oligosaccharides begins on the cytosolic side of the endoplasmic reticulum membrane and finishes in its lumen. The sequential addition of sugars to dolichol pyrophosphate produces dolichol-linked oligosaccharides containing fourteen sugars, including two GlcNAcs, nine mannoses and three glucoses. Once assembled, the oligosaccharide is transferred from the lipid to nascent proteins by oligosaccharyltransferases. In the lumen of the endoplasmic reticulum, adds the third and last glucose residue from dolichyl phosphate glucose (Dol-P-Glc) onto the lipid-linked oligosaccharide intermediate Glc(2)Man(9)GlcNAc(2)-PP-Dol to produce Glc(3)Man(9)GlcNAc(2)-PP-Dol. The polypeptide is Dol-P-Glc:Glc(2)Man(9)GlcNAc(2)-PP-Dol alpha-1,2-glucosyltransferase (Homo sapiens (Human)).